A 658-amino-acid polypeptide reads, in one-letter code: NADH-ubiquinone oxidoreductase chain 5 (658 aa).

Transmembrane regions (helical) follow at residues 4-23 (TLIV…GRKI), 30-52 (IITC…EVGI), 81-103 (LTVS…SISY), 112-129 (RFFS…ILVT), 133-155 (YLLM…NFWF), 168-190 (LLTN…WSFG), 200-222 (LAPY…GATA), 243-262 (VSAL…LLMR), 272-294 (TVLI…IGLF), 301-319 (VIAY…GIGL), 329-351 (LVNH…HSVA), 364-386 (PFLP…VPFM), 409-431 (IVYF…VLYL), 452-471 (LFLN…FGFL), 505-527 (VPVL…SILY), 607-629 (LSTG…YIST), and 639-656 (LLIL…NKLL).

Belongs to the complex I subunit 5 family.

It is found in the mitochondrion inner membrane. It catalyses the reaction a ubiquinone + NADH + 5 H(+)(in) = a ubiquinol + NAD(+) + 4 H(+)(out). Functionally, core subunit of the mitochondrial membrane respiratory chain NADH dehydrogenase (Complex I) that is believed to belong to the minimal assembly required for catalysis. Complex I functions in the transfer of electrons from NADH to the respiratory chain. The immediate electron acceptor for the enzyme is believed to be ubiquinone. This is NADH-ubiquinone oxidoreductase chain 5 (nad5) from Talaromyces marneffei (Penicillium marneffei).